Here is a 319-residue protein sequence, read N- to C-terminus: tRNA U34 carboxymethyltransferase (319 aa).

Residues Lys-88, Trp-102, Lys-107, Gly-126, 176–177, Met-192, Tyr-196, and Arg-311 contribute to the carboxy-S-adenosyl-L-methionine site; that span reads LE.

Belongs to the class I-like SAM-binding methyltransferase superfamily. CmoB family. As to quaternary structure, homotetramer.

The catalysed reaction is carboxy-S-adenosyl-L-methionine + 5-hydroxyuridine(34) in tRNA = 5-carboxymethoxyuridine(34) in tRNA + S-adenosyl-L-homocysteine + H(+). Functionally, catalyzes carboxymethyl transfer from carboxy-S-adenosyl-L-methionine (Cx-SAM) to 5-hydroxyuridine (ho5U) to form 5-carboxymethoxyuridine (cmo5U) at position 34 in tRNAs. The chain is tRNA U34 carboxymethyltransferase from Azotobacter vinelandii (strain DJ / ATCC BAA-1303).